The primary structure comprises 571 residues: Carboxylesterase 3B (571 aa).

An N-terminal signal peptide occupies residues 1 to 31 (MTNMRTMIPAGSSVLVWVTCLLLAFVTTVTG). A disulfide bridge connects residues Cys-100 and Cys-127. The active-site Acyl-ester intermediate is Ser-232. Cysteines 284 and 295 form a disulfide. The N-linked (GlcNAc...) asparagine glycan is linked to Asn-311. Catalysis depends on charge relay system residues Glu-347 and His-460. The short motif at 568–571 (PEEL) is the Prevents secretion from ER element.

The protein belongs to the type-B carboxylesterase/lipase family.

The protein resides in the endoplasmic reticulum lumen. It carries out the reaction a carboxylic ester + H2O = an alcohol + a carboxylate + H(+). Its function is as follows. Involved in the detoxification of xenobiotics and in the activation of ester and amide prodrugs. This Mus musculus (Mouse) protein is Carboxylesterase 3B (Ces3b).